A 500-amino-acid chain; its full sequence is L-arabinose isomerase (500 aa).

Mn(2+) is bound by residues Glu-306, Glu-333, His-350, and His-450.

It belongs to the arabinose isomerase family. In terms of assembly, homohexamer. Mn(2+) is required as a cofactor.

The catalysed reaction is beta-L-arabinopyranose = L-ribulose. The protein operates within carbohydrate degradation; L-arabinose degradation via L-ribulose; D-xylulose 5-phosphate from L-arabinose (bacterial route): step 1/3. In terms of biological role, catalyzes the conversion of L-arabinose to L-ribulose. In Yersinia pestis (strain Pestoides F), this protein is L-arabinose isomerase.